The chain runs to 337 residues: Ornithine carbamoyltransferase, catabolic (337 aa).

Carbamoyl phosphate contacts are provided by residues 57–60, Gln-84, Arg-108, and 135–138; these read STRT and HPTQ. L-ornithine is bound by residues Asn-167, Asp-231, and 235 to 236; that span reads SM. Carbamoyl phosphate is bound by residues 272-273 and Arg-317; that span reads CL.

It belongs to the aspartate/ornithine carbamoyltransferase superfamily. OTCase family.

Its subcellular location is the cytoplasm. The enzyme catalyses carbamoyl phosphate + L-ornithine = L-citrulline + phosphate + H(+). Its pathway is amino-acid degradation; L-arginine degradation via ADI pathway; carbamoyl phosphate from L-arginine: step 2/2. Its function is as follows. Reversibly catalyzes the transfer of the carbamoyl group from carbamoyl phosphate (CP) to the N(epsilon) atom of ornithine (ORN) to produce L-citrulline. The polypeptide is Ornithine carbamoyltransferase, catabolic (arcB) (Streptococcus agalactiae).